The chain runs to 358 residues: MKKISVLIIDDSALIRKLLTEIINARPDMEVIGAAPDPIVAREMIRTLNPDVLTLDVEMPKMDGLEFLEKLMRLRPMPVVMVSTLTERGSEVTFRALELGAVDFVAKPKMDIRNSLEAYTDEITGKIRTASTARIHRLEPVASNGAASGSIVQMPRHHGISTEKLIIIGASTGGTEAIKDVLIHLPPDCPGILITQHMPEGFTRSFAERLDRLCKIRVKEAEGGERVLPGHAYLAPGHSHLLLKKSGANYVTELSQTDPVNRHRPSVDVLFQSAAHCAGKNAVGVILTGMGKDGAAGMLDMHHAGAYNLAQDETSCVVFGMPKEAITLGAVDEIVPLQDMARRILARLVGAGKQAVRV.

Residues 5 to 122 (SVLIIDDSAL…RNSLEAYTDE (118 aa)) form the Response regulatory domain. D56 carries the post-translational modification 4-aspartylphosphate. Residues 159-351 (GISTEKLIII…RRILARLVGA (193 aa)) enclose the CheB-type methylesterase domain. Residues S171, H197, and D293 contribute to the active site.

The protein belongs to the CheB family. Post-translationally, phosphorylated by CheA. Phosphorylation of the N-terminal regulatory domain activates the methylesterase activity.

The protein resides in the cytoplasm. The enzyme catalyses [protein]-L-glutamate 5-O-methyl ester + H2O = L-glutamyl-[protein] + methanol + H(+). It carries out the reaction L-glutaminyl-[protein] + H2O = L-glutamyl-[protein] + NH4(+). In terms of biological role, involved in chemotaxis. Part of a chemotaxis signal transduction system that modulates chemotaxis in response to various stimuli. Catalyzes the demethylation of specific methylglutamate residues introduced into the chemoreceptors (methyl-accepting chemotaxis proteins or MCP) by CheR. Also mediates the irreversible deamidation of specific glutamine residues to glutamic acid. The protein is Protein-glutamate methylesterase/protein-glutamine glutaminase of Nitrosomonas europaea (strain ATCC 19718 / CIP 103999 / KCTC 2705 / NBRC 14298).